Consider the following 647-residue polypeptide: Acetyl-coenzyme A synthetase (647 aa).

CoA contacts are provided by residues Arg-190–Arg-193 and Thr-310. Residues Gly-386–Pro-388, Asp-410–Thr-415, Asp-499, and Arg-514 each bind ATP. Ser-522 lines the CoA pocket. Arg-525 contacts ATP. Mg(2+) contacts are provided by Val-536, His-538, and Val-541. Position 583 (Arg-583) interacts with CoA. Lys-608 carries the post-translational modification N6-acetyllysine.

The protein belongs to the ATP-dependent AMP-binding enzyme family. Mg(2+) is required as a cofactor. In terms of processing, acetylated. Deacetylation by the SIR2-homolog deacetylase activates the enzyme.

The catalysed reaction is acetate + ATP + CoA = acetyl-CoA + AMP + diphosphate. Functionally, catalyzes the conversion of acetate into acetyl-CoA (AcCoA), an essential intermediate at the junction of anabolic and catabolic pathways. AcsA undergoes a two-step reaction. In the first half reaction, AcsA combines acetate with ATP to form acetyl-adenylate (AcAMP) intermediate. In the second half reaction, it can then transfer the acetyl group from AcAMP to the sulfhydryl group of CoA, forming the product AcCoA. This Xylella fastidiosa (strain Temecula1 / ATCC 700964) protein is Acetyl-coenzyme A synthetase.